The chain runs to 557 residues: Dihydroxy-acid dehydratase (557 aa).

Residue aspartate 78 participates in Mg(2+) binding. Cysteine 119 provides a ligand contact to [2Fe-2S] cluster. 2 residues coordinate Mg(2+): aspartate 120 and lysine 121. Lysine 121 carries the post-translational modification N6-carboxylysine. Cysteine 192 lines the [2Fe-2S] cluster pocket. Position 442 (glutamate 442) interacts with Mg(2+). The Proton acceptor role is filled by serine 468.

This sequence belongs to the IlvD/Edd family. As to quaternary structure, homodimer. It depends on [2Fe-2S] cluster as a cofactor. Mg(2+) is required as a cofactor.

It carries out the reaction (2R)-2,3-dihydroxy-3-methylbutanoate = 3-methyl-2-oxobutanoate + H2O. The catalysed reaction is (2R,3R)-2,3-dihydroxy-3-methylpentanoate = (S)-3-methyl-2-oxopentanoate + H2O. It participates in amino-acid biosynthesis; L-isoleucine biosynthesis; L-isoleucine from 2-oxobutanoate: step 3/4. It functions in the pathway amino-acid biosynthesis; L-valine biosynthesis; L-valine from pyruvate: step 3/4. Its function is as follows. Functions in the biosynthesis of branched-chain amino acids. Catalyzes the dehydration of (2R,3R)-2,3-dihydroxy-3-methylpentanoate (2,3-dihydroxy-3-methylvalerate) into 2-oxo-3-methylpentanoate (2-oxo-3-methylvalerate) and of (2R)-2,3-dihydroxy-3-methylbutanoate (2,3-dihydroxyisovalerate) into 2-oxo-3-methylbutanoate (2-oxoisovalerate), the penultimate precursor to L-isoleucine and L-valine, respectively. The protein is Dihydroxy-acid dehydratase of Bacillus cereus (strain AH820).